A 312-amino-acid polypeptide reads, in one-letter code: Transcriptional regulator protein Pur-beta (312 aa).

Residues 1-32 (MADGDSGSERGGGGGPCGFQPASRGGGEQETQ) are disordered. Ala-2 carries the N-acetylalanine modification. Ser-6 and Ser-8 each carry phosphoserine. Arg-24 is subject to Omega-N-methylarginine. A DNA-binding region spans residues 28–254 (EQETQELASK…LRVSEVKPSY (227 aa)). Thr-31 carries the post-translational modification Phosphothreonine. Ser-101 is modified (phosphoserine). Arg-152 is subject to Omega-N-methylarginine. N6-acetyllysine is present on Lys-267. Positions 284-295 (ERQRDKLYERRG) are enriched in basic and acidic residues. Residues 284-312 (ERQRDKLYERRGGGSGGGEESEGEEVDED) are disordered. Position 294 is an omega-N-methylarginine (Arg-294). Phosphoserine is present on residues Ser-298 and Ser-304. Residues 302–312 (EESEGEEVDED) show a composition bias toward acidic residues.

The protein belongs to the PUR DNA-binding protein family. Homodimer, heterodimer with PURA and heterotrimer with PURA and YBX1/Y-box protein 1. Interacts with MYOCD and SRF. As to expression, expressed in myocardium of heart failure patients.

The protein localises to the nucleus. Functionally, transcriptional regulator which can act as an activator or a repressor. Represses the transcription of ACTA2 in fibroblasts and smooth muscle cells via its ability to interact with the purine-rich strand of a MCAT- containing element in the 5' flanking region of the gene. Represses the transcription of MYOCD, capable of repressing all isoforms of MYOCD but the magnitude of the repressive effects is most notable for the SMC- specific isoforms. Promotes hepatic glucose production by activating the transcription of ADCY6, leading to cAMP accumulation, increased PKA activity, CREB activation, and increased transcription of PCK1 and G6PC genes. Has capacity to bind repeated elements in single-stranded DNA such as the purine-rich single strand of the PUR element located upstream of the MYC gene. Participates in transcriptional and translational regulation of alpha-MHC expression in cardiac myocytes by binding to the purine-rich negative regulatory (PNR) element Modulates constitutive liver galectin-3 gene transcription by binding to its promoter. May play a role in the dendritic transport of a subset of mRNAs. The chain is Transcriptional regulator protein Pur-beta (PURB) from Homo sapiens (Human).